The following is a 281-amino-acid chain: Inhibitor of growth protein 2 (281 aa).

Residues V49–K101 are a coiled coil. The tract at residues S123–V204 is disordered. Positions E131–M141 are enriched in basic and acidic residues. Residues K182–K194 show a composition bias toward basic residues. K196 participates in a covalent cross-link: Glycyl lysine isopeptide (Lys-Gly) (interchain with G-Cter in SUMO1). The segment at P213–D262 adopts a PHD-type zinc-finger fold. C216, C218, C229, C234, H240, C243, C256, and C259 together coordinate Zn(2+). A compositionally biased stretch (basic and acidic residues) spans G261–K275. The disordered stretch occupies residues G261–R281. The segment at K265–R281 is PBR.

It belongs to the ING family. As to quaternary structure, interacts with H3K4me3 and to a lesser extent with H3K4me2. Component of a mSin3A-like complex at least consisting of SIN3A, HDAC1, HDAC2, RBBP4/RbAp48, RBBP7/RbAp46, SAP30 and ING2. Sumoylation enhances its association with SIN3A and is required for binding to some target gene promoters, this is the case for TMEM71.

It localises to the nucleus. Functionally, seems to be involved in p53/TP53 activation and p53/TP53-dependent apoptotic pathways, probably by enhancing acetylation of p53/TP53. Component of a mSin3A-like corepressor complex, which is probably involved in deacetylation of nucleosomal histones. ING2 activity seems to be modulated by binding to phosphoinositides (PtdInsPs). This Mus musculus (Mouse) protein is Inhibitor of growth protein 2 (Ing2).